A 142-amino-acid polypeptide reads, in one-letter code: Large-conductance mechanosensitive channel (142 aa).

The next 2 membrane-spanning stretches (helical) occupy residues 14–34 and 86–106; these read VVDL…VSSL and FGQF…VFLV.

This sequence belongs to the MscL family. As to quaternary structure, homopentamer.

It is found in the cell inner membrane. Functionally, channel that opens in response to stretch forces in the membrane lipid bilayer. May participate in the regulation of osmotic pressure changes within the cell. This is Large-conductance mechanosensitive channel from Rhizorhabdus wittichii (strain DSM 6014 / CCUG 31198 / JCM 15750 / NBRC 105917 / EY 4224 / RW1) (Sphingomonas wittichii).